Reading from the N-terminus, the 188-residue chain is Phosphatidylcholine-sterol acyltransferase (188 aa).

Asparagine 20 carries N-linked (GlcNAc...) asparagine glycosylation. Histidine 169 acts as the Charge relay system in catalysis.

The protein belongs to the AB hydrolase superfamily. Lipase family. As to expression, detected in blood plasma (at protein level).

It is found in the secreted. The enzyme catalyses a sterol + a 1,2-diacyl-sn-glycero-3-phosphocholine = a sterol ester + a 1-acyl-sn-glycero-3-phosphocholine. It catalyses the reaction a 1-O-alkyl-2-acetyl-sn-glycero-3-phosphocholine + H2O = a 1-O-alkyl-sn-glycero-3-phosphocholine + acetate + H(+). It carries out the reaction a 1-hexadecanoyl-2-acyl-sn-glycero-3-phosphocholine + (24S)-hydroxycholesterol = (24S)-24-hydroxycholesterol ester + 1-hexadecanoyl-sn-glycero-3-phosphocholine. The catalysed reaction is (24S)-hydroxycholesterol + 1-hexadecanoyl-2-(9Z,12Z-octadecadienoyl)-sn-glycero-3-phosphocholine = (24S)-hydroxycholesterol 3-linoleoate + 1-hexadecanoyl-sn-glycero-3-phosphocholine. The enzyme catalyses 1-hexadecanoyl-2-(5Z,8Z,11Z,14Z-eicosatetraenoyl)-sn-glycero-3-phosphocholine + cholesterol = cholesteryl (5Z,8Z,11Z,14Z)-eicosatetraenoate + 1-hexadecanoyl-sn-glycero-3-phosphocholine. It catalyses the reaction 1-hexadecanoyl-2-(9Z-octadecenoyl)-sn-glycero-3-phosphocholine + cholesterol = cholesteryl (9Z-octadecenoate) + 1-hexadecanoyl-sn-glycero-3-phosphocholine. It carries out the reaction 1-hexadecanoyl-2-(8Z,11Z,14Z-eicosatrienoyl)-sn-glycero-3-phosphocholine + cholesterol = cholesteryl (8Z,11Z,14Z)-eicosatrienoate + 1-hexadecanoyl-sn-glycero-3-phosphocholine. The catalysed reaction is 1-hexadecanoyl-2-(5Z,8Z,11Z-eicosatrienoyl)-sn-glycero-3-phosphocholine + cholesterol = cholesteryl (5Z,8Z,11Z)-eicosatrienoate + 1-hexadecanoyl-sn-glycero-3-phosphocholine. The enzyme catalyses 1-hexadecanoyl-2-(5Z,8Z,11Z,14Z,17Z-eicosapentaenoyl)-sn-glycero-3-phosphocholine + cholesterol = (5Z,8Z,11Z,14Z,17Z-eicosapentaenoyl)-cholesterol + 1-hexadecanoyl-sn-glycero-3-phosphocholine. It catalyses the reaction 1-hexadecanoyl-2-(9Z,12Z-octadecadienoyl)-sn-glycero-3-phosphocholine + cholesterol = cholesteryl (9Z,12Z)-octadecadienoate + 1-hexadecanoyl-sn-glycero-3-phosphocholine. It carries out the reaction 1-hexadecanoyl-2-(6Z,9Z,12Z-octadecatrienoyl)-sn-glycero-3-phosphocholine + cholesterol = (6Z,9Z,12Z-octadecatrienoyl)-cholesterol + 1-hexadecanoyl-sn-glycero-3-phosphocholine. The catalysed reaction is 1-hexadecanoyl-2-(11Z,14Z,17Z-eicosatrienoyl)-sn-glycero-3-phosphocholine + cholesterol = (11Z,14Z,17Z-eicosatrienoyl)-cholesterol + 1-hexadecanoyl-sn-glycero-3-phosphocholine. The enzyme catalyses 1-hexadecanoyl-2-(9Z,12Z,15Z-octadecatrienoyl)-sn-glycero-3-phosphocholine + cholesterol = (9Z,12Z,15Z-octadecatrienoyl)-cholesterol + 1-hexadecanoyl-sn-glycero-3-phosphocholine. It catalyses the reaction 1-hexadecanoyl-2-(9Z,12Z-octadecadienoyl)-sn-glycero-3-phosphocholine + H2O = (9Z,12Z)-octadecadienoate + 1-hexadecanoyl-sn-glycero-3-phosphocholine + H(+). It carries out the reaction 1-hexadecanoyl-2-(5Z,8Z,11Z,14Z-eicosatetraenoyl)-sn-glycero-3-phosphocholine + H2O = 1-hexadecanoyl-sn-glycero-3-phosphocholine + (5Z,8Z,11Z,14Z)-eicosatetraenoate + H(+). The catalysed reaction is a 1-O-alkyl-2-acetyl-sn-glycero-3-phosphocholine + 1-hexadecanoyl-sn-glycero-3-phosphocholine = 1-hexadecanoyl-2-acetyl-sn-glycero-3-phosphocholine + a 1-O-alkyl-sn-glycero-3-phosphocholine. Its function is as follows. Central enzyme in the extracellular metabolism of plasma lipoproteins. Synthesized mainly in the liver and secreted into plasma where it converts cholesterol and phosphatidylcholines (lecithins) to cholesteryl esters and lysophosphatidylcholines on the surface of high and low density lipoproteins (HDLs and LDLs). The cholesterol ester is then transported back to the liver. Also produced in the brain by primary astrocytes, and esterifies free cholesterol on nascent APOE-containing lipoproteins secreted from glia and influences cerebral spinal fluid (CSF) APOE- and APOA1 levels. Together with APOE and the cholesterol transporter ABCA1, plays a key role in the maturation of glial-derived, nascent lipoproteins. Required for remodeling high-density lipoprotein particles into their spherical forms. Has a preference for plasma 16:0-18:2 or 18:O-18:2 phosphatidylcholines. Catalyzes the hydrolysis of 1-O-alkyl-2-acetyl-sn-glycero-3-phosphocholine (platelet-activating factor or PAF) to 1-O-alkyl-sn-glycero-3-phosphocholine (lyso-PAF). Also catalyzes the transfer of the acetate group from PAF to 1-hexadecanoyl-sn-glycero-3-phosphocholine forming lyso-PAF. Catalyzes the esterification of (24S)-hydroxycholesterol (24(S)OH-C), also known as cerebrosterol to produce 24(S)OH-C monoesters. This Sus scrofa (Pig) protein is Phosphatidylcholine-sterol acyltransferase (LCAT).